The primary structure comprises 239 residues: Probable 2-phosphosulfolactate phosphatase (239 aa).

The protein belongs to the ComB family. Requires Mg(2+) as cofactor.

The catalysed reaction is (2R)-O-phospho-3-sulfolactate + H2O = (2R)-3-sulfolactate + phosphate. The polypeptide is Probable 2-phosphosulfolactate phosphatase (Clostridium botulinum (strain 657 / Type Ba4)).